The following is a 114-amino-acid chain: uncharacterized protein (114 aa).

Residues 7 to 27 traverse the membrane as a helical segment; sequence YIFSFWFFFLVEYVVTFRLFL. Residues 90–114 are disordered; that stretch reads KNSPEKKKFKRGLPISSKYTDGKKR.

It localises to the membrane. This is an uncharacterized protein from Saccharomyces cerevisiae (strain ATCC 204508 / S288c) (Baker's yeast).